Here is a 404-residue protein sequence, read N- to C-terminus: D-galactonate dehydratase family member PC1_0802 (404 aa).

2 residues coordinate substrate: Asn-37 and His-122. The Proton donor/acceptor role is filled by Tyr-159. Asp-212 is a Mg(2+) binding site. The active-site Proton donor/acceptor is His-214. Residues Glu-238 and Glu-264 each contribute to the Mg(2+) site. Residues Glu-264, Arg-285, His-314, Asp-318, and Glu-341 each coordinate substrate.

It belongs to the mandelate racemase/muconate lactonizing enzyme family. GalD subfamily. The cofactor is Mg(2+).

The catalysed reaction is D-mannonate = 2-dehydro-3-deoxy-D-gluconate + H2O. In terms of biological role, has low D-mannonate dehydratase activity (in vitro), suggesting that this is not a physiological substrate and that it has no significant role in D-mannonate degradation in vivo. Has no detectable activity with a panel of 70 other acid sugars (in vitro). The sequence is that of D-galactonate dehydratase family member PC1_0802 from Pectobacterium carotovorum subsp. carotovorum (strain PC1).